Here is a 101-residue protein sequence, read N- to C-terminus: NAD(P)H-quinone oxidoreductase subunit 4L, chloroplastic (101 aa).

A run of 3 helical transmembrane segments spans residues 2-22, 32-52, and 61-81; these read LLEH…YGLI, MCLE…SDFF, and IFSI…SAIV.

The protein belongs to the complex I subunit 4L family. NDH is composed of at least 16 different subunits, 5 of which are encoded in the nucleus.

The protein localises to the plastid. Its subcellular location is the chloroplast thylakoid membrane. The enzyme catalyses a plastoquinone + NADH + (n+1) H(+)(in) = a plastoquinol + NAD(+) + n H(+)(out). It catalyses the reaction a plastoquinone + NADPH + (n+1) H(+)(in) = a plastoquinol + NADP(+) + n H(+)(out). Functionally, NDH shuttles electrons from NAD(P)H:plastoquinone, via FMN and iron-sulfur (Fe-S) centers, to quinones in the photosynthetic chain and possibly in a chloroplast respiratory chain. The immediate electron acceptor for the enzyme in this species is believed to be plastoquinone. Couples the redox reaction to proton translocation, and thus conserves the redox energy in a proton gradient. The polypeptide is NAD(P)H-quinone oxidoreductase subunit 4L, chloroplastic (Carica papaya (Papaya)).